We begin with the raw amino-acid sequence, 132 residues long: Vacuolar protein sorting-associated protein 55 homolog (132 aa).

A run of 4 helical transmembrane segments spans residues 7–27 (VAALAFAGVVGLTFLVLGCAL), 32–52 (TWTPMFVITFYVLSPVPLLIA), 68–88 (LALFITTGIVISAFALPIVLA), and 98–118 (CFLVNTGSVIMFGTIIAYFYL).

Belongs to the OB-RGRP/VPS55 family.

The protein resides in the endosome membrane. In terms of biological role, involved in endosomal protein transport. This Caenorhabditis elegans protein is Vacuolar protein sorting-associated protein 55 homolog.